The sequence spans 67 residues: DNA-directed RNA polymerase subunit omega (67 aa).

This sequence belongs to the RNA polymerase subunit omega family. As to quaternary structure, the RNAP catalytic core consists of 2 alpha, 1 beta, 1 beta' and 1 omega subunit. When a sigma factor is associated with the core the holoenzyme is formed, which can initiate transcription.

The enzyme catalyses RNA(n) + a ribonucleoside 5'-triphosphate = RNA(n+1) + diphosphate. Its function is as follows. Promotes RNA polymerase assembly. Latches the N- and C-terminal regions of the beta' subunit thereby facilitating its interaction with the beta and alpha subunits. This is DNA-directed RNA polymerase subunit omega from Dictyoglomus turgidum (strain DSM 6724 / Z-1310).